Here is a 28-residue protein sequence, read N- to C-terminus: MAGASAKVVAMLLSLQGPXSLRMVSESG.

The region spanning 11-28 (MLLSLQGPXSLRMVSESG) is the Expansin-like CBD domain.

Belongs to the expansin family. Expansin B subfamily.

It is found in the secreted. The protein localises to the cell wall. Its subcellular location is the membrane. In terms of biological role, may cause loosening and extension of plant cell walls by disrupting non-covalent bonding between cellulose microfibrils and matrix glucans. In Pseudotsuga menziesii (Douglas-fir), this protein is Expansin-B1.